The primary structure comprises 517 residues: Ribonuclease Y (517 aa).

Residues 1 to 21 (MIESLIALIAAIVGLGIGYLV) traverse the membrane as a helical segment. Positions 207 to 273 (LINVINIKND…TKVIELLVED (67 aa)) constitute a KH domain. One can recognise an HD domain in the interval 333–426 (ALAHSLEVAH…VCAADTLSAA (94 aa)).

Belongs to the RNase Y family.

It is found in the cell membrane. In terms of biological role, endoribonuclease that initiates mRNA decay. This Campylobacter jejuni subsp. jejuni serotype O:2 (strain ATCC 700819 / NCTC 11168) protein is Ribonuclease Y.